The following is a 345-amino-acid chain: MKFIDEAIIKVQAGAGGHGCLSFRREKFIPFGGPDGGDGGNGGSIYLIADKNINTLVDFRHQHHFRARRGENGRGRLQTGKSSEDIYIPVPLGTEAWEAETGELLGDLTRPGQTLLVAKGGAHGLGNARFKSSTNRAPRKTTQGKPGEERTLRLELKLLADVGLLGLPNAGKSTFIRQVSAATPKVADYPFTTLHPHLGVVRIDSNRSFVAADIPGLIEGAAQGAGLGVRFLKHLSRTRLLLHFVDVAPLEPTLSPVDSVRAIHRELQQFSPELAAQEQWLVFNKTDLISSSERASRCQEIIREICWQKPVYEISALTGEGCQRLIHAVMQYLEEVSPYEKEDSQ.

The Obg domain occupies 1-159 (MKFIDEAIIK…RTLRLELKLL (159 aa)). Residues 127–148 (NARFKSSTNRAPRKTTQGKPGE) are disordered. Residues 130-144 (FKSSTNRAPRKTTQG) are compositionally biased toward polar residues. Residues 160–334 (ADVGLLGLPN…LIHAVMQYLE (175 aa)) form the OBG-type G domain. GTP contacts are provided by residues 166-173 (GLPNAGKS), 191-195 (FTTLH), 213-216 (DIPG), 284-287 (NKTD), and 315-317 (SAL). The Mg(2+) site is built by Ser173 and Thr193.

The protein belongs to the TRAFAC class OBG-HflX-like GTPase superfamily. OBG GTPase family. In terms of assembly, monomer. The cofactor is Mg(2+).

It localises to the cytoplasm. In terms of biological role, an essential GTPase which binds GTP, GDP and possibly (p)ppGpp with moderate affinity, with high nucleotide exchange rates and a fairly low GTP hydrolysis rate. Plays a role in control of the cell cycle, stress response, ribosome biogenesis and in those bacteria that undergo differentiation, in morphogenesis control. The polypeptide is GTPase Obg (Nitrosococcus oceani (strain ATCC 19707 / BCRC 17464 / JCM 30415 / NCIMB 11848 / C-107)).